The primary structure comprises 115 residues: Protamine-2 (115 aa).

The tract at residues 1–115 is disordered; that stretch reads MVRCHVKSPT…RRRRRCGRQL (115 aa). Phosphoserine is present on S8. Positions 24–38 are enriched in basic and acidic residues; sequence ETEHPDQARELRPED. Composition is skewed to basic residues over residues 44–79 and 102–115; these read RTHR…RRRG and RRMR…GRQL.

It belongs to the protamine P2 family. Interacts with TDRP. Proteolytic processing into mature chains is required for histone eviction during spermatogenesis. Transition proteins (TNP1 and TNP2) are required for processing. Testis.

The protein resides in the nucleus. It localises to the chromosome. Functionally, protamines substitute for histones in the chromatin of sperm during the haploid phase of spermatogenesis. They compact sperm DNA into a highly condensed, stable and inactive complex. This Bos taurus (Bovine) protein is Protamine-2 (PRM2).